A 961-amino-acid polypeptide reads, in one-letter code: E3 ubiquitin-protein ligase TRIM37 (961 aa).

Position 1 is an N-acetylmethionine (M1). The RING-type; degenerate zinc finger occupies 15–55 (CFICMEKLRDARLCPHCSKLCCFSCIRRWLTEQRAQCPHCR). The segment at 90–132 (NEKDKCENHHEKLSVFCWTCKKCICHQCALWGGMHGGHTFKPL) adopts a B box-type zinc-finger fold. Residues C95, H98, C117, and H124 each contribute to the Zn(2+) site. Residues 132–234 (LAEIYEQHVT…VEHQLRSCSK (103 aa)) are a coiled coil. The MATH domain maps to 276-403 (YDSATFVLEN…NDTVILRFQV (128 aa)). Residues 419–450 (ITQLEAAQTGYIQQINNLKERLTIELSRTQKS) adopt a coiled-coil conformation. Disordered regions lie at residues 447-514 (TQKS…HHEL), 529-561 (VNHL…SGEN), 645-665 (SLLQ…KQQA), 776-811 (AVDS…SPRA), and 874-961 (LESH…GGGR). S454 carries the phosphoserine modification. Basic and acidic residues predominate over residues 504-514 (KIQNEDYHHEL). The span at 535-545 (SSSSASSTATS) shows a compositional bias: low complexity. Residues 548-561 (EENDIDEETMSGEN) are compositionally biased toward acidic residues. A compositionally biased stretch (basic and acidic residues) spans 776–787 (AVDSGENSRSKG). The span at 795 to 806 (GSSGSSQSGSRH) shows a compositional bias: low complexity. Over residues 903–915 (SDIECDTENEEQE) the composition is skewed to acidic residues.

It belongs to the TRIM/RBCC family. In terms of assembly, associates with the PRC2/EED-EZH2 complex. Auto-ubiquitinated. Highly expressed in testis and brain. In embryonic tissues, expressed in epithelia, including ducts of the developing pancreas, epithelium of the midgut and nasal epithelium. In adult, detected in the central and peripheral nervous systems, including enteric ganglia, retina and the adrenal medulla (at protein level).

The protein resides in the chromosome. It is found in the cytoplasm. It localises to the perinuclear region. Its subcellular location is the peroxisome membrane. The enzyme catalyses S-ubiquitinyl-[E2 ubiquitin-conjugating enzyme]-L-cysteine + [acceptor protein]-L-lysine = [E2 ubiquitin-conjugating enzyme]-L-cysteine + N(6)-ubiquitinyl-[acceptor protein]-L-lysine.. The protein operates within protein modification; protein ubiquitination. Functionally, E3 ubiquitin-protein ligase required to prevent centriole reduplication. Probably acts by ubiquitinating positive regulators of centriole reduplication. Mediates monoubiquitination of 'Lys-119' of histone H2A (H2AK119Ub), a specific tag for epigenetic transcriptional repression: associates with some Polycomb group (PcG) multiprotein PRC2-like complex and mediates repression of target genes. Also acts as a positive regulator of peroxisome import by mediating monoubiquitination of PEX5 at 'Lys-472': monoubiquitination promotes PEX5 stabilitation by preventing its polyubiquitination and degradation by the proteasome. The chain is E3 ubiquitin-protein ligase TRIM37 from Mus musculus (Mouse).